The following is a 101-amino-acid chain: Large ribosomal subunit protein uL24 (101 aa).

This sequence belongs to the universal ribosomal protein uL24 family. In terms of assembly, part of the 50S ribosomal subunit.

In terms of biological role, one of two assembly initiator proteins, it binds directly to the 5'-end of the 23S rRNA, where it nucleates assembly of the 50S subunit. Functionally, one of the proteins that surrounds the polypeptide exit tunnel on the outside of the subunit. The protein is Large ribosomal subunit protein uL24 of Ligilactobacillus salivarius (strain UCC118) (Lactobacillus salivarius).